A 265-amino-acid chain; its full sequence is tRNA pseudouridine synthase A (265 aa).

Asp-53 functions as the Nucleophile in the catalytic mechanism. Tyr-111 contacts substrate.

Belongs to the tRNA pseudouridine synthase TruA family. In terms of assembly, homodimer.

The catalysed reaction is uridine(38/39/40) in tRNA = pseudouridine(38/39/40) in tRNA. In terms of biological role, formation of pseudouridine at positions 38, 39 and 40 in the anticodon stem and loop of transfer RNAs. The sequence is that of tRNA pseudouridine synthase A from Acinetobacter baumannii (strain ACICU).